Here is a 263-residue protein sequence, read N- to C-terminus: 4-hydroxy-tetrahydrodipicolinate reductase (263 aa).

10 to 15 (GASGKM) is a binding site for NAD(+). Arg-38 lines the NADP(+) pocket. Residues 97 to 99 (GTT) and 123 to 126 (APNF) each bind NAD(+). His-153 (proton donor/acceptor) is an active-site residue. Position 154 (His-154) interacts with (S)-2,3,4,5-tetrahydrodipicolinate. Lys-157 acts as the Proton donor in catalysis. 163–164 (GT) lines the (S)-2,3,4,5-tetrahydrodipicolinate pocket.

The protein belongs to the DapB family.

The protein resides in the cytoplasm. The enzyme catalyses (S)-2,3,4,5-tetrahydrodipicolinate + NAD(+) + H2O = (2S,4S)-4-hydroxy-2,3,4,5-tetrahydrodipicolinate + NADH + H(+). It catalyses the reaction (S)-2,3,4,5-tetrahydrodipicolinate + NADP(+) + H2O = (2S,4S)-4-hydroxy-2,3,4,5-tetrahydrodipicolinate + NADPH + H(+). It functions in the pathway amino-acid biosynthesis; L-lysine biosynthesis via DAP pathway; (S)-tetrahydrodipicolinate from L-aspartate: step 4/4. Its function is as follows. Catalyzes the conversion of 4-hydroxy-tetrahydrodipicolinate (HTPA) to tetrahydrodipicolinate. This is 4-hydroxy-tetrahydrodipicolinate reductase from Dehalococcoides mccartyi (strain CBDB1).